A 374-amino-acid chain; its full sequence is Chaperone protein DnaJ (374 aa).

A J domain is found at 5–70; sequence DYYEILGVSR…QKRAAYDQYG (66 aa). The segment at 129–207 adopts a CR-type zinc-finger fold; it reads GVTREIRIPT…CHGHGRVEKS (79 aa). Zn(2+) is bound by residues Cys142, Cys145, Cys159, Cys162, Cys181, Cys184, Cys195, and Cys198. CXXCXGXG motif repeat units follow at residues 142-149, 159-166, 181-188, and 195-202; these read CDVCHGSG, CPTCHGQG, CPTCQGQG, and CTKCHGHG.

The protein belongs to the DnaJ family. In terms of assembly, homodimer. Requires Zn(2+) as cofactor.

Its subcellular location is the cytoplasm. Participates actively in the response to hyperosmotic and heat shock by preventing the aggregation of stress-denatured proteins and by disaggregating proteins, also in an autonomous, DnaK-independent fashion. Unfolded proteins bind initially to DnaJ; upon interaction with the DnaJ-bound protein, DnaK hydrolyzes its bound ATP, resulting in the formation of a stable complex. GrpE releases ADP from DnaK; ATP binding to DnaK triggers the release of the substrate protein, thus completing the reaction cycle. Several rounds of ATP-dependent interactions between DnaJ, DnaK and GrpE are required for fully efficient folding. Also involved, together with DnaK and GrpE, in the DNA replication of plasmids through activation of initiation proteins. The protein is Chaperone protein DnaJ of Sodalis glossinidius (strain morsitans).